The following is a 442-amino-acid chain: tRNA-2-methylthio-N(6)-dimethylallyladenosine synthase (442 aa).

An MTTase N-terminal domain is found at 2-120 (KKVFIRTFGC…LPKMIVDKET (119 aa)). [4Fe-4S] cluster contacts are provided by Cys-11, Cys-49, Cys-83, Cys-157, Cys-161, and Cys-164. Residues 143–375 (RVEGGAAFVS…NEVIEAETAR (233 aa)) enclose the Radical SAM core domain. The TRAM domain occupies 378-441 (QTMIGTVQRC…TFSLRGKIVE (64 aa)).

This sequence belongs to the methylthiotransferase family. MiaB subfamily. As to quaternary structure, monomer. The cofactor is [4Fe-4S] cluster.

The protein resides in the cytoplasm. The catalysed reaction is N(6)-dimethylallyladenosine(37) in tRNA + (sulfur carrier)-SH + AH2 + 2 S-adenosyl-L-methionine = 2-methylsulfanyl-N(6)-dimethylallyladenosine(37) in tRNA + (sulfur carrier)-H + 5'-deoxyadenosine + L-methionine + A + S-adenosyl-L-homocysteine + 2 H(+). Catalyzes the methylthiolation of N6-(dimethylallyl)adenosine (i(6)A), leading to the formation of 2-methylthio-N6-(dimethylallyl)adenosine (ms(2)i(6)A) at position 37 in tRNAs that read codons beginning with uridine. In Neisseria gonorrhoeae (strain ATCC 700825 / FA 1090), this protein is tRNA-2-methylthio-N(6)-dimethylallyladenosine synthase.